Consider the following 93-residue polypeptide: Small ribosomal subunit protein bS20 (93 aa).

It belongs to the bacterial ribosomal protein bS20 family.

Binds directly to 16S ribosomal RNA. The protein is Small ribosomal subunit protein bS20 of Dictyoglomus thermophilum (strain ATCC 35947 / DSM 3960 / H-6-12).